The sequence spans 320 residues: L-lactate dehydrogenase (320 aa).

NAD(+) is bound by residues 15–16 (FV), D37, K42, Y68, and 82–83 (GA). Substrate contacts are provided by residues Q85, R91, and 123–126 (NPVD). NAD(+) contacts are provided by residues 121–123 (ATN) and S146. 151–154 (DSAR) contributes to the substrate binding site. Beta-D-fructose 1,6-bisphosphate contacts are provided by residues R156 and 168 to 172 (QNVHA). H178 (proton acceptor) is an active-site residue. Y223 carries the post-translational modification Phosphotyrosine. T232 is a binding site for substrate.

The protein belongs to the LDH/MDH superfamily. LDH family. As to quaternary structure, homotetramer.

The protein localises to the cytoplasm. It carries out the reaction (S)-lactate + NAD(+) = pyruvate + NADH + H(+). The protein operates within fermentation; pyruvate fermentation to lactate; (S)-lactate from pyruvate: step 1/1. Its activity is regulated as follows. Allosterically activated by fructose 1,6-bisphosphate (FBP). Its function is as follows. Catalyzes the conversion of lactate to pyruvate. In Bacillus subtilis (strain 168), this protein is L-lactate dehydrogenase.